The chain runs to 383 residues: Succinyl-diaminopimelate desuccinylase (383 aa).

His-73 provides a ligand contact to Zn(2+). Asp-75 is a catalytic residue. Asp-107 lines the Zn(2+) pocket. Glu-141 serves as the catalytic Proton acceptor. Residues Glu-142, Glu-170, and His-356 each coordinate Zn(2+).

Belongs to the peptidase M20A family. DapE subfamily. As to quaternary structure, homodimer. Requires Zn(2+) as cofactor. It depends on Co(2+) as a cofactor.

It catalyses the reaction N-succinyl-(2S,6S)-2,6-diaminopimelate + H2O = (2S,6S)-2,6-diaminopimelate + succinate. The protein operates within amino-acid biosynthesis; L-lysine biosynthesis via DAP pathway; LL-2,6-diaminopimelate from (S)-tetrahydrodipicolinate (succinylase route): step 3/3. In terms of biological role, catalyzes the hydrolysis of N-succinyl-L,L-diaminopimelic acid (SDAP), forming succinate and LL-2,6-diaminopimelate (DAP), an intermediate involved in the bacterial biosynthesis of lysine and meso-diaminopimelic acid, an essential component of bacterial cell walls. The protein is Succinyl-diaminopimelate desuccinylase of Pseudomonas fluorescens (strain ATCC BAA-477 / NRRL B-23932 / Pf-5).